The following is a 120-amino-acid chain: MYDPAEKYFNCTDIQRAFFEAGIKLGAIFHQYTGIPVNSENASMAEEFIERSTMIQPFVENVRISINNVKRSSGTYSYSSLNEKMLHAEVLINYNGKKVLGVLNYDEGLDYPVMYAKEVL.

Substrate is bound by residues glutamate 20 and methionine 114.

Belongs to the archaeal dihydroneopterin aldolase family. Homotetramer.

It carries out the reaction 7,8-dihydroneopterin = 6-hydroxymethyl-7,8-dihydropterin + glycolaldehyde. Its function is as follows. Catalyzes the conversion of 7,8-dihydroneopterin (H2Neo) to 6-hydroxymethyl-7,8-dihydropterin (6-HMD). In Picrophilus torridus (strain ATCC 700027 / DSM 9790 / JCM 10055 / NBRC 100828 / KAW 2/3), this protein is Dihydroneopterin aldolase.